The primary structure comprises 151 residues: uncharacterized protein (151 aa).

Residues 130–151 (REIPRTEPDPETTPDNSYRNYL) form a disordered region.

This is an uncharacterized protein from Enterobacteria phage P4 (Bacteriophage P4).